Here is a 70-residue protein sequence, read N- to C-terminus: Large ribosomal subunit protein uL29 (70 aa).

The protein belongs to the universal ribosomal protein uL29 family.

The protein is Large ribosomal subunit protein uL29 of Rickettsia bellii (strain OSU 85-389).